The primary structure comprises 316 residues: ATP synthase gamma chain (316 aa).

It belongs to the ATPase gamma chain family. As to quaternary structure, F-type ATPases have 2 components, CF(1) - the catalytic core - and CF(0) - the membrane proton channel. CF(1) has five subunits: alpha(3), beta(3), gamma(1), delta(1), epsilon(1). CF(0) has three main subunits: a, b and c.

It is found in the cellular thylakoid membrane. Produces ATP from ADP in the presence of a proton gradient across the membrane. The gamma chain is believed to be important in regulating ATPase activity and the flow of protons through the CF(0) complex. In Parasynechococcus marenigrum (strain WH8102), this protein is ATP synthase gamma chain.